Reading from the N-terminus, the 502-residue chain is Cytochrome P450 71B16 (502 aa).

Residues M1 to K21 form a helical membrane-spanning segment. Residue C444 coordinates heme.

This sequence belongs to the cytochrome P450 family. It depends on heme as a cofactor.

The protein localises to the membrane. The polypeptide is Cytochrome P450 71B16 (CYP71B16) (Arabidopsis thaliana (Mouse-ear cress)).